Consider the following 637-residue polypeptide: Early transcription factor 70 kDa subunit (637 aa).

A Helicase ATP-binding domain is found at arginine 32–glutamate 185. An ATP-binding site is contributed by histidine 45–threonine 52. The short motif at aspartate 135 to histidine 138 is the DEXH box element. Residues lysine 327–leucine 507 enclose the Helicase C-terminal domain.

This sequence belongs to the helicase family. VETF subfamily. As to quaternary structure, heterodimer of a 70 kDa and a 82 kDa subunit. Part of the early transcription complex composed of ETF, RAP94/OPG109, and the DNA-directed RNA polymerase.

The protein resides in the virion. Functionally, acts with RNA polymerase to initiate transcription from early gene promoters. Is recruited by the RPO-associated protein of 94 kDa RAP94/OPG109 to form the early transcription complex, which also contains the core RNA polymerase. ETF heterodimer binds to early gene promoters. This is Early transcription factor 70 kDa subunit (OPG118) from Homo sapiens (Human).